The sequence spans 292 residues: Medium chain reductase/dehydrogenase ucsI (292 aa).

Cys43 contacts Zn(2+). Substrate is bound at residue Tyr49. Residues His65 and Glu66 each contribute to the Zn(2+) site. NAD(+)-binding positions include 184–189 (GCGPVG), Asp208, Arg213, and 276–278 (IGA).

It belongs to the zinc-containing alcohol dehydrogenase family. Zn(2+) serves as cofactor.

Its pathway is mycotoxin biosynthesis. In terms of biological role, medium chain reductase/dehydrogenase; part of the gene cluster that mediates the biosynthesis of UCS1025A, a member of the pyrrolizidinone family that acts as a strong telomerase inhibitor and displays potent antibacterial and antitumor properties. These compounds share a hemiaminal-containing pyrrolizidinone core fused with a gamma-lactone, giving a furopyrrolizidine that is connected to a decalin fragment. The polyketide synthase module (PKS) of the PKS-NRPS ucsA is responsible for the synthesis of the polyketide backbone via the condensation of an acetyl-CoA starter unit with 6 malonyl-CoA units. The downstream nonribosomal peptide synthetase (NRPS) module then amidates the carboxyl end of the polyketide with a 2S,3S-methylproline derived from L-isoleucine by the 2-oxoglutarate-dependent dioxygenase ucsF which converts L-isoleucine to (4S,5S)-4-methylpyrroline-5-carboxylate that is further converted to 2S,3S-methylproline by the pyrroline-5-carboxylate reductase ucsG. Reductive release of the completed aminoacyl polyketide from the assembly line can form the 3-pyrrolin-2-one structure via an intramolecular Knoevenagel reaction. Because ucsA lacks a designated enoylreductase (ER) domain, the required activity is provided the enoyl reductase ucsL. This keto acyclic precursor is the substrate of the Diels-Alderase ucsH, that catalyzes the Diels-Alder cycloaddition. Oxidation of the 3S-methyl group to a carboxylate by the cytochrome P450 monooxygenase ucsK allows an oxa-Michael cyclization that might involve the reductase/dehydrogenase ucsI and which furnishes the furopyrrolizidine. The oxidase ucsJ likely plays a critical role in stereoselective reduction of the C5-C6 double bond to afford the required R-configured carboxylate group. Further enolization and oxidation at C5 by an unidentified enzyme affords the last intermediate that can undergo oxa-Michael cyclization to yield UCS1025A. This chain is Medium chain reductase/dehydrogenase ucsI, found in Acremonium sp.